A 589-amino-acid polypeptide reads, in one-letter code: ATP-dependent lipid A-core flippase (589 aa).

The next 6 membrane-spanning stretches (helical) occupy residues 37–57, 72–92, 151–171, 173–193, 260–280, and 286–306; these read ALAI…PALL, LWLV…SGFL, IMKL…LVYL, WKLM…IQVL, SAIT…IALL, and TTTV…IAPV. An ABC transmembrane type-1 domain is found at 37–318; the sequence is ALAIGATIVA…LSDAATPVTR (282 aa). The 235-residue stretch at 350 to 584 folds into the ABC transporter domain; that stretch reads IEFADVSVIY…NGAYAHLYRL (235 aa). An ATP-binding site is contributed by 384–391; it reads GASGSGKT.

It belongs to the ABC transporter superfamily. Lipid exporter (TC 3.A.1.106) family. In terms of assembly, homodimer.

The protein localises to the cell inner membrane. The catalysed reaction is ATP + H2O + lipid A-core oligosaccharideSide 1 = ADP + phosphate + lipid A-core oligosaccharideSide 2.. In terms of biological role, involved in lipopolysaccharide (LPS) biosynthesis. Translocates lipid A-core from the inner to the outer leaflet of the inner membrane. Transmembrane domains (TMD) form a pore in the inner membrane and the ATP-binding domain (NBD) is responsible for energy generation. This is ATP-dependent lipid A-core flippase from Polaromonas sp. (strain JS666 / ATCC BAA-500).